A 231-amino-acid chain; its full sequence is UPF0758 protein pc1765 (231 aa).

The MPN domain maps to 107 to 229 (LIEHSSHAYQ…YVSFKDQNLL (123 aa)). Zn(2+) contacts are provided by His-178, His-180, and Asp-191. Positions 178–191 (HNHPSGDPMPSNQD) match the JAMM motif motif.

It belongs to the UPF0758 family.

The protein is UPF0758 protein pc1765 of Protochlamydia amoebophila (strain UWE25).